Consider the following 130-residue polypeptide: Small ribosomal subunit protein uS11 (130 aa).

Belongs to the universal ribosomal protein uS11 family. In terms of assembly, part of the 30S ribosomal subunit. Interacts with proteins S7 and S18. Binds to IF-3.

Functionally, located on the platform of the 30S subunit, it bridges several disparate RNA helices of the 16S rRNA. Forms part of the Shine-Dalgarno cleft in the 70S ribosome. The chain is Small ribosomal subunit protein uS11 from Kosmotoga olearia (strain ATCC BAA-1733 / DSM 21960 / TBF 19.5.1).